Reading from the N-terminus, the 161-residue chain is Zinc metalloproteinase/disintegrin (161 aa).

The 72-residue stretch at 1-72 folds into the Peptidase M12B domain; sequence ERDLLVAVTM…ENPQCILNKH (72 aa). His12 is a binding site for Zn(2+). Glu13 is an active-site residue. The Zn(2+) site is built by His16 and His22. 2 disulfides stabilise this stretch: Cys27/Cys51 and Cys29/Cys34. The propeptide occupies 73 to 88; sequence LRTDTVSTPVSGNELL. One can recognise a Disintegrin domain in the interval 89–161; sequence EAGEECDCGT…ADCPRNRFHA (73 aa). Intrachain disulfides connect Cys94/Cys109, Cys96/Cys104, Cys103/Cys126, Cys117/Cys123, Cys122/Cys147, and Cys135/Cys154. The short motif at 139 to 141 is the Cell attachment site element; that stretch reads RGD.

Belongs to the venom metalloproteinase (M12B) family. P-II subfamily. P-IIa sub-subfamily. In terms of assembly, monomer. Expressed by the venom gland.

The protein resides in the secreted. Functionally, impairs hemostasis in the envenomed animal. Its function is as follows. Disintegrin: inhibit platelet aggregation induced by ADP, thrombin, platelet-activating factor and collagen. Acts by inhibiting fibrinogen interaction with platelet receptors GPIIb/GPIIIa (ITGA2B/ITGB3). This Bothrops jararaca (Jararaca) protein is Zinc metalloproteinase/disintegrin.